Here is a 282-residue protein sequence, read N- to C-terminus: ATP synthase gamma chain (282 aa).

It belongs to the ATPase gamma chain family. In terms of assembly, F-type ATPases have 2 components, CF(1) - the catalytic core - and CF(0) - the membrane proton channel. CF(1) has five subunits: alpha(3), beta(3), gamma(1), delta(1), epsilon(1). CF(0) has three main subunits: a, b and c.

The protein localises to the cell membrane. In terms of biological role, produces ATP from ADP in the presence of a proton gradient across the membrane. The gamma chain is believed to be important in regulating ATPase activity and the flow of protons through the CF(0) complex. The chain is ATP synthase gamma chain from Clostridium botulinum (strain 657 / Type Ba4).